The primary structure comprises 167 residues: Leptin (167 aa).

The N-terminal stretch at 1–21 (MRCGPLCRFLWLWPYLSYIEA) is a signal peptide. Cys117 and Cys167 are joined by a disulfide.

This sequence belongs to the leptin family.

It localises to the secreted. Functionally, key player in the regulation of energy balance and body weight control. Once released into the circulation, has central and peripheral effects by binding LEPR, found in many tissues, which results in the activation of several major signaling pathways. In the hypothalamus, acts as an appetite-regulating factor that induces a decrease in food intake and an increase in energy consumption by inducing anorexinogenic factors and suppressing orexigenic neuropeptides, also regulates bone mass and secretion of hypothalamo-pituitary-adrenal hormones. In the periphery, increases basal metabolism, influences reproductive function, regulates pancreatic beta-cell function and insulin secretion, is pro-angiogenic for endothelial cell and affects innate and adaptive immunity. In the arcuate nucleus of the hypothalamus, activates by depolarization POMC neurons inducing FOS and SOCS3 expression to release anorexigenic peptides and inhibits by hyperpolarization NPY neurons inducing SOCS3 with a consequent reduction on release of orexigenic peptides. In addition to its known satiety inducing effect, has a modulatory role in nutrient absorption. In the intestine, reduces glucose absorption by enterocytes by activating PKC and leading to a sequential activation of p38, PI3K and ERK signaling pathways which exerts an inhibitory effect on glucose absorption. Acts as a growth factor on certain tissues, through the activation of different signaling pathways increases expression of genes involved in cell cycle regulation such as CCND1, via JAK2-STAT3 pathway, or VEGFA, via MAPK1/3 and PI3K-AKT1 pathways. May also play an apoptotic role via JAK2-STAT3 pathway and up-regulation of BIRC5 expression. Pro-angiogenic, has mitogenic activity on vascular endothelial cells and plays a role in matrix remodeling by regulating the expression of matrix metalloproteinases (MMPs) and tissue inhibitors of metalloproteinases (TIMPs). In innate immunity, modulates the activity and function of neutrophils by increasing chemotaxis and the secretion of oxygen radicals. Increases phagocytosis by macrophages and enhances secretion of pro-inflammatory mediators. Increases cytotoxic ability of NK cells. Plays a pro-inflammatory role, in synergy with IL1B, by inducing NOS2 which promotes the production of IL6, IL8 and Prostaglandin E2, through a signaling pathway that involves JAK2, PI3K, MAP2K1/MEK1 and MAPK14/p38. In adaptive immunity, promotes the switch of memory T-cells towards T helper-1 cell immune responses. Increases CD4(+)CD25(-) T-cell proliferation and reduces autophagy during TCR (T-cell receptor) stimulation, through MTOR signaling pathway activation and BCL2 up-regulation. The polypeptide is Leptin (LEP) (Ursus thibetanus (Asiatic black bear)).